Reading from the N-terminus, the 702-residue chain is Solute carrier organic anion transporter family member 1B3 (702 aa).

Topologically, residues 1–28 (MDQHQHLNKTAESASSEKKKTRRCNGFK) are cytoplasmic. Residues 29–48 (MFLAALSFSYIAKALGGIIM) traverse the membrane as a helical segment. The Extracellular portion of the chain corresponds to 49–67 (KISITQIERRFDISSSLAG). Residues 68–88 (LIDGSFEIGNLLVIVFVSYFG) traverse the membrane as a helical segment. The Cytoplasmic segment spans residues 89-94 (SKLHRP). A helical membrane pass occupies residues 95-119 (KLIGIGCLLMGTGSILTSLPHFFMG). Residues 120–168 (YYRYSKETHINPSENSTSSLSTCLINQTLSFNGTSPEIVEKDCVKESGS) lie on the Extracellular side of the membrane. N-linked (GlcNAc...) asparagine glycosylation is found at Asn134, Asn145, and Asn151. The chain crosses the membrane as a helical span at residues 169–197 (HMWIYVFMGNMLRGIGETPIVPLGISYID). Over 198–216 (DFAKEGHSSLYLGSLNAIG) the chain is Cytoplasmic. A helical membrane pass occupies residues 217 to 237 (MIGPVIGFALGSLFAKMYVDI). Residues 238-255 (GYVDLSTIRITPKDSRWV) lie on the Extracellular side of the membrane. The chain crosses the membrane as a helical span at residues 256–280 (GAWWLGFLVSGLFSIISSIPFFFLP). Over 281–331 (KNPNKPQKERKISLSLHVLKTNDDRNQTANLTNQGKNVTKNVTGFFQSLKS) the chain is Cytoplasmic. Residues Ser293 and Ser295 each carry the phosphoserine modification. The chain crosses the membrane as a helical span at residues 332 to 353 (ILTNPLYVIFLLLTLLQVSSFI). The Extracellular portion of the chain corresponds to 354–373 (GSFTYVFKYMEQQYGQSASH). Residues 374-397 (ANFLLGIITIPTVATGMFLGGFII) form a helical membrane-spanning segment. Residues 398-401 (KKFK) lie on the Cytoplasmic side of the membrane. The helical transmembrane segment at 402 to 425 (LSLVGIAKFSFLTSMISFLFQLLY) threads the bilayer. At 426-537 (FPLICESKSV…NTCTRKFFIY (112 aa)) the chain is on the extracellular side. Residue Asn445 is glycosylated (N-linked (GlcNAc...) asparagine). Positions 453 to 508 (DVPLSYCNSECNCDESQWEPVCGNNGITYLSPCLAGCKSSSGIKKHTVFYNCSCVE) constitute a Kazal-like domain. 3 cysteine pairs are disulfide-bonded: Cys459-Cys489, Cys465-Cys485, and Cys474-Cys506. N-linked (GlcNAc...) asparagine glycosylation is found at Asn503 and Asn516. A helical transmembrane segment spans residues 538 to 560 (VAIQVINSLFSATGGTTFILLTV). Residues 561-569 (KIVQPELKA) are Cytoplasmic-facing. The helical transmembrane segment at 570–595 (LAMGFQSMVIRTLGGILAPIYFGALI) threads the bilayer. At 596-629 (DKTCMKWSTNSCGAQGACRIYNSVFFGRVYLGLS) the chain is on the extracellular side. Residues 630–647 (IALRFPALVLYIVFIFAM) form a helical membrane-spanning segment. Residues 648-695 (KKKFQGKDTKASDNERKVMDEANLEFLNNGEHFVPSAGTDSKTCNLDM) are Cytoplasmic-facing. Ser683 carries the phosphoserine modification.

Belongs to the organo anion transporter (TC 2.A.60) family. Post-translationally, N-glycosylated. Highly expressed in liver, in particular at the basolateral membrane of hepatocytes near the central vein. Expressed in the placenta. In testis, primarily localized to the basal membrane of Sertoli cells and weakly expressed in Leydig cells and within the tubules.

The protein resides in the basolateral cell membrane. It is found in the basal cell membrane. The enzyme catalyses estrone 3-sulfate(out) + hydrogencarbonate(in) = estrone 3-sulfate(in) + hydrogencarbonate(out). The catalysed reaction is 17beta-estradiol 17-O-(beta-D-glucuronate)(out) = 17beta-estradiol 17-O-(beta-D-glucuronate)(in). It carries out the reaction taurocholate(out) = taurocholate(in). It catalyses the reaction estrone 3-sulfate(out) = estrone 3-sulfate(in). The enzyme catalyses dehydroepiandrosterone 3-sulfate(out) = dehydroepiandrosterone 3-sulfate(in). The catalysed reaction is leukotriene C4(out) = leukotriene C4(in). It carries out the reaction L-thyroxine(out) = L-thyroxine(in). It catalyses the reaction prostaglandin E2(out) = prostaglandin E2(in). The enzyme catalyses (4E,15E)-bilirubin IXalpha C8-beta-D-glucuronoside(out) = (4E,15E)-bilirubin IXalpha C8-beta-D-glucuronoside(in). The catalysed reaction is bilirubin IXalpha bis-beta-D-glucuronoside(out) = bilirubin IXalpha bis-beta-D-glucuronoside(in). Its function is as follows. Mediates the Na(+)-independent uptake of organic anions. Shows broad substrate specificity, can transport both organic anions such as bile acid taurocholate (cholyltaurine) and conjugated steroids (17-beta-glucuronosyl estradiol, dehydroepiandrosterone sulfate (DHEAS), and estrone 3-sulfate), as well as eicosanoid leukotriene C4, prostaglandin E2 and L-thyroxine (T4). Hydrogencarbonate/HCO3(-) acts as the probable counteranion that exchanges for organic anions. Shows a pH-sensitive substrate specificity towards sulfated steroids, taurocholate and T4 which may be ascribed to the protonation state of the binding site and leads to a stimulation of substrate transport in an acidic microenvironment. Involved in the clearance of bile acids and organic anions from the liver. Can take up bilirubin glucuronides from plasma into the liver, contributing to the detoxification-enhancing liver-blood shuttling loop. Transports coproporphyrin I and III, by-products of heme synthesis, and may be involved in their hepatic disposition. May contribute to regulate the transport of organic compounds in testes across the blood-testis-barrier. Can transport HMG-CoA reductase inhibitors (also known as statins) such as pitavastatin, a clinically important class of hypolipidemic drugs. May play an important role in plasma and tissue distribution of the structurally diverse chemotherapeutic drugs methotrexate and paclitaxel. May also transport antihypertension agents, such as the angiotensin-converting enzyme (ACE) inhibitor prodrug enalapril, and the highly selective angiotensin II AT1-receptor antagonist valsartan, in the liver. The sequence is that of Solute carrier organic anion transporter family member 1B3 (SLCO1B3) from Homo sapiens (Human).